Here is a 334-residue protein sequence, read N- to C-terminus: Retinol dehydrogenase 14 (334 aa).

Residue 51–57 (GANSGLG) coordinates NADP(+). S190 contributes to the substrate binding site. The active-site Proton acceptor is Y215.

It belongs to the short-chain dehydrogenases/reductases (SDR) family.

It catalyses the reaction all-trans-retinol + NADP(+) = all-trans-retinal + NADPH + H(+). The catalysed reaction is 11-cis-retinol + NADP(+) = 11-cis-retinal + NADPH + H(+). It carries out the reaction 9-cis-retinol + NADP(+) = 9-cis-retinal + NADPH + H(+). In terms of biological role, retinol dehydrogenase with a clear preference for NADP. Displays high activity towards 9-cis, 11-cis and all-trans-retinol. Shows a very weak activity towards 13-cis-retinol. Has no activity towards steroids. The sequence is that of Retinol dehydrogenase 14 (Rdh14) from Mus musculus (Mouse).